We begin with the raw amino-acid sequence, 195 residues long: Large ribosomal subunit protein mL58 (195 aa).

The N-terminal 18 residues, 1 to 18 (MIGRGVCCRSFHTAGSAW), are a transit peptide targeting the mitochondrion.

Belongs to the mitochondrion-specific ribosomal protein mL58 family. In terms of assembly, component of the mitochondrial large ribosomal subunit (mt-LSU). Mature yeast 74S mitochondrial ribosomes consist of a small (37S) and a large (54S) subunit. The 37S small subunit contains a 15S ribosomal RNA (15S mt-rRNA) and 34 different proteins. The 54S large subunit contains a 21S rRNA (21S mt-rRNA) and 46 different proteins.

The protein localises to the mitochondrion. In terms of biological role, component of the mitochondrial ribosome (mitoribosome), a dedicated translation machinery responsible for the synthesis of mitochondrial genome-encoded proteins, including at least some of the essential transmembrane subunits of the mitochondrial respiratory chain. The mitoribosomes are attached to the mitochondrial inner membrane and translation products are cotranslationally integrated into the membrane. In Saccharomyces cerevisiae (strain ATCC 204508 / S288c) (Baker's yeast), this protein is Large ribosomal subunit protein mL58 (MRPL20).